The chain runs to 161 residues: Protein lin-52 (161 aa).

Positions 137–161 (TGSASPRYLQPTPPKNVAEETTGSQ) are disordered.

The protein belongs to the lin-52 family. As to quaternary structure, component of the DRM complex, at least composed of lin-9, lin-35, lin-37, lin-52, lin-53, lin-54- dpl-1 and efl-1. Interacts with zft-11; the interaction is required to suppress the activation of non-neuronal genes in neurons.

Its subcellular location is the nucleus. In terms of biological role, synthetic multivulva class B (synMuvB) protein. SynMuvB proteins are required to repress the induction of vulval development by Ras signaling and probably act by forming the multiprotein DRM complex that represses transcription. In association with the zinc finger protein ztf-11, negatively regulates the expression of non-neuronal genes during neurogenesis. The sequence is that of Protein lin-52 from Caenorhabditis elegans.